We begin with the raw amino-acid sequence, 298 residues long: ATP synthase gamma chain (298 aa).

It belongs to the ATPase gamma chain family. As to quaternary structure, F-type ATPases have 2 components, CF(1) - the catalytic core - and CF(0) - the membrane proton channel. CF(1) has five subunits: alpha(3), beta(3), gamma(1), delta(1), epsilon(1). CF(0) has three main subunits: a, b and c.

It is found in the cell membrane. Functionally, produces ATP from ADP in the presence of a proton gradient across the membrane. The gamma chain is believed to be important in regulating ATPase activity and the flow of protons through the CF(0) complex. This is ATP synthase gamma chain from Mycobacterium leprae (strain Br4923).